The chain runs to 119 residues: Holo-[acyl-carrier-protein] synthase (119 aa).

Residues Asp8 and Glu58 each coordinate Mg(2+).

This sequence belongs to the P-Pant transferase superfamily. AcpS family. Mg(2+) is required as a cofactor.

Its subcellular location is the cytoplasm. It carries out the reaction apo-[ACP] + CoA = holo-[ACP] + adenosine 3',5'-bisphosphate + H(+). Its function is as follows. Transfers the 4'-phosphopantetheine moiety from coenzyme A to a Ser of acyl-carrier-protein. The chain is Holo-[acyl-carrier-protein] synthase from Bacillus mycoides (strain KBAB4) (Bacillus weihenstephanensis).